The chain runs to 338 residues: Glyceraldehyde-3-phosphate dehydrogenase, cytosolic (338 aa).

NAD(+) contacts are provided by residues 13 to 14 (RI), Asp35, and Arg82. D-glyceraldehyde 3-phosphate-binding positions include 153–155 (SCT), Thr184, 213–214 (TG), and Arg236. The Nucleophile role is filled by Cys154. Asn318 is an NAD(+) binding site.

It belongs to the glyceraldehyde-3-phosphate dehydrogenase family. In terms of assembly, homotetramer.

It localises to the cytoplasm. It catalyses the reaction D-glyceraldehyde 3-phosphate + phosphate + NAD(+) = (2R)-3-phospho-glyceroyl phosphate + NADH + H(+). It functions in the pathway carbohydrate degradation; glycolysis; pyruvate from D-glyceraldehyde 3-phosphate: step 1/5. Its function is as follows. Key enzyme in glycolysis that catalyzes the first step of the pathway by converting D-glyceraldehyde 3-phosphate (G3P) into 3-phospho-D-glyceroyl phosphate. Essential for the maintenance of cellular ATP levels and carbohydrate metabolism. The sequence is that of Glyceraldehyde-3-phosphate dehydrogenase, cytosolic (GAPC) from Dianthus caryophyllus (Carnation).